Here is a 278-residue protein sequence, read N- to C-terminus: Cytoplasmic envelopment protein 1 (278 aa).

It belongs to the herpesviridae cytoplasmic envelopment protein 1 family. In terms of assembly, interacts with BSRF1 tegument protein; the BBRF2-BSRF1 complexes oligomerize and might play a role in tethering the viral nucleocapsids to the host Golgi membrane during secondary envelopment.

The protein localises to the virion. The protein resides in the virion tegument. Its subcellular location is the host cytoplasm. It localises to the host Golgi apparatus. Plays a critical role in cytoplasmic virus egress. Participates in the final step of tegumentation and envelope acquisition within the host cytoplasm. The polypeptide is Cytoplasmic envelopment protein 1 (Homo sapiens (Human)).